A 351-amino-acid chain; its full sequence is Selenide, water dikinase (351 aa).

The active site involves Cys-20. ATP-binding positions include Lys-23 and 51-53; that span reads TKD. Mg(2+) is bound at residue Asp-54. Residues Asp-71, Asp-94, and 142–144 each bind ATP; that span reads GHS. Asp-94 lines the Mg(2+) pocket. Asp-230 is a binding site for Mg(2+).

It belongs to the selenophosphate synthase 1 family. Class I subfamily. Homodimer. Mg(2+) is required as a cofactor.

The enzyme catalyses hydrogenselenide + ATP + H2O = selenophosphate + AMP + phosphate + 2 H(+). Synthesizes selenophosphate from selenide and ATP. The chain is Selenide, water dikinase from Pasteurella multocida (strain Pm70).